The chain runs to 358 residues: Polyadenylate-binding protein-interacting protein 11 (358 aa).

The span at 1–19 (MAVVETGAAATAADAGGVV) shows a compositional bias: low complexity. A disordered region spans residues 1–45 (MAVVETGAAATAADAGGVVIQPPPSSPPSSMTSQDSGVSSDDQNH). Polar residues predominate over residues 31 to 41 (MTSQDSGVSSD). Positions 92–102 (KLNPMAEEFVP) match the PAM2-like motif. The tract at residues 136 to 164 (GGYGNENGGFRRKKSFGQGKRRMNARTSM) is disordered. Residues 145 to 159 (FRRKKSFGQGKRRMN) show a composition bias toward basic residues. The short motif at 146–157 (RRKKSFGQGKRR) is the Bipartite nuclear localization signal element. 2 consecutive RRM domains span residues 173–248 (RTVY…PSKT) and 270–346 (RTIY…PSKT).

In terms of tissue distribution, expressed in cauline leaves, stems, immature siliques and primary inflorescences.

The protein localises to the nucleus. In Arabidopsis thaliana (Mouse-ear cress), this protein is Polyadenylate-binding protein-interacting protein 11 (CID11).